The chain runs to 370 residues: Cobalt-precorrin-5B C(1)-methyltransferase (370 aa).

Belongs to the CbiD family.

It catalyses the reaction Co-precorrin-5B + S-adenosyl-L-methionine = Co-precorrin-6A + S-adenosyl-L-homocysteine. It functions in the pathway cofactor biosynthesis; adenosylcobalamin biosynthesis; cob(II)yrinate a,c-diamide from sirohydrochlorin (anaerobic route): step 6/10. Functionally, catalyzes the methylation of C-1 in cobalt-precorrin-5B to form cobalt-precorrin-6A. The protein is Cobalt-precorrin-5B C(1)-methyltransferase of Prochlorococcus marinus (strain MIT 9215).